We begin with the raw amino-acid sequence, 160 residues long: 2-C-methyl-D-erythritol 2,4-cyclodiphosphate synthase (160 aa).

The a divalent metal cation site is built by aspartate 10 and histidine 12. 4-CDP-2-C-methyl-D-erythritol 2-phosphate contacts are provided by residues 10 to 12 and 36 to 37; these read DVH and HS. A divalent metal cation is bound at residue histidine 44. Residues 58–60, 63–67, and arginine 144 contribute to the 4-CDP-2-C-methyl-D-erythritol 2-phosphate site; these read DIG and FPDTD.

The protein belongs to the IspF family. As to quaternary structure, homotrimer. A divalent metal cation is required as a cofactor.

It carries out the reaction 4-CDP-2-C-methyl-D-erythritol 2-phosphate = 2-C-methyl-D-erythritol 2,4-cyclic diphosphate + CMP. It functions in the pathway isoprenoid biosynthesis; isopentenyl diphosphate biosynthesis via DXP pathway; isopentenyl diphosphate from 1-deoxy-D-xylulose 5-phosphate: step 4/6. Functionally, involved in the biosynthesis of isopentenyl diphosphate (IPP) and dimethylallyl diphosphate (DMAPP), two major building blocks of isoprenoid compounds. Catalyzes the conversion of 4-diphosphocytidyl-2-C-methyl-D-erythritol 2-phosphate (CDP-ME2P) to 2-C-methyl-D-erythritol 2,4-cyclodiphosphate (ME-CPP) with a corresponding release of cytidine 5-monophosphate (CMP). This Dechloromonas aromatica (strain RCB) protein is 2-C-methyl-D-erythritol 2,4-cyclodiphosphate synthase.